The sequence spans 215 residues: Meiotic chromosome segregation protein P8B7.28c (215 aa).

The disordered stretch occupies residues 159 to 202; it reads TINSEYADDVSDNTDEERTESKGQQESNSAEEYDDDDSDEDRME. Acidic residues-rich tracts occupy residues 164-176 and 187-201; these read YADD…DEER and SAEE…EDRM.

The protein localises to the nucleus. It localises to the nucleolus. Functionally, required for meiotic chromosome segregation. The protein is Meiotic chromosome segregation protein P8B7.28c of Schizosaccharomyces pombe (strain 972 / ATCC 24843) (Fission yeast).